Here is a 330-residue protein sequence, read N- to C-terminus: Ribosomal RNA small subunit methyltransferase C (330 aa).

This sequence belongs to the methyltransferase superfamily. RsmC family. Monomer.

It is found in the cytoplasm. It carries out the reaction guanosine(1207) in 16S rRNA + S-adenosyl-L-methionine = N(2)-methylguanosine(1207) in 16S rRNA + S-adenosyl-L-homocysteine + H(+). In terms of biological role, specifically methylates the guanine in position 1207 of 16S rRNA in the 30S particle. In Haemophilus influenzae (strain PittEE), this protein is Ribosomal RNA small subunit methyltransferase C.